A 345-amino-acid chain; its full sequence is D-fructose 1,6-bisphosphatase class 2/sedoheptulose 1,7-bisphosphatase (345 aa).

Mn(2+) contacts are provided by D33, E57, D97, and E100. Substrate contacts are provided by residues 100-102 (EGT), Y131, 176-178 (RPR), and 198-200 (DGD). E225 lines the Mn(2+) pocket.

This sequence belongs to the FBPase class 2 family. As to quaternary structure, homotetramer. Mn(2+) serves as cofactor.

It catalyses the reaction beta-D-fructose 1,6-bisphosphate + H2O = beta-D-fructose 6-phosphate + phosphate. The enzyme catalyses D-sedoheptulose 1,7-bisphosphate + H2O = D-sedoheptulose 7-phosphate + phosphate. It functions in the pathway carbohydrate biosynthesis; Calvin cycle. In terms of biological role, catalyzes the hydrolysis of fructose 1,6-bisphosphate (Fru 1,6-P2) and sedoheptulose 1,7-bisphosphate (Sed 1,7-P2) to fructose 6-phosphate and sedoheptulose 7-phosphate, respectively. This chain is D-fructose 1,6-bisphosphatase class 2/sedoheptulose 1,7-bisphosphatase, found in Crocosphaera subtropica (strain ATCC 51142 / BH68) (Cyanothece sp. (strain ATCC 51142)).